The following is a 175-amino-acid chain: Sialidase 85-1.3 (175 aa).

It belongs to the glycosyl hydrolase 33 family.

It carries out the reaction Hydrolysis of alpha-(2-&gt;3)-, alpha-(2-&gt;6)-, alpha-(2-&gt;8)- glycosidic linkages of terminal sialic acid residues in oligosaccharides, glycoproteins, glycolipids, colominic acid and synthetic substrates.. Developmentally regulated neuraminidase implicated in parasite invasion of cells. May contribute to the pathology during T.cruzi infection by cleaving sialic acid from cells of the immune system. The protein is Sialidase 85-1.3 (SA85-1.3) of Trypanosoma cruzi.